A 442-amino-acid polypeptide reads, in one-letter code: D-serine dehydratase (442 aa).

Lys118 carries the post-translational modification N6-(pyridoxal phosphate)lysine.

It belongs to the serine/threonine dehydratase family. DsdA subfamily. Monomer. Pyridoxal 5'-phosphate is required as a cofactor.

It catalyses the reaction D-serine = pyruvate + NH4(+). This chain is D-serine dehydratase, found in Shigella flexneri.